The primary structure comprises 173 residues: Photosystem I assembly protein Ycf3 (173 aa).

TPR repeat units follow at residues 35–68 (AFAYYRDGMSAQSEGAYAEALENYYEALRLEEDP), 72–105 (SYTFYNIALIHTSNGDQTKALEYYRQALDLNPKM), and 120–153 (GEQAAEQGDMEMAEALFDQAAFYWKQAIRLAPDN).

It belongs to the Ycf3 family.

Its subcellular location is the plastid. It localises to the cyanelle thylakoid membrane. Its function is as follows. Essential for the assembly of the photosystem I (PSI) complex. May act as a chaperone-like factor to guide the assembly of the PSI subunits. The sequence is that of Photosystem I assembly protein Ycf3 from Cyanophora paradoxa.